The sequence spans 240 residues: 1-acyl-sn-glycerol-3-phosphate acyltransferase (240 aa).

Positions 73–78 (HQNNYD) match the HXXXXD motif motif.

It belongs to the 1-acyl-sn-glycerol-3-phosphate acyltransferase family.

The protein localises to the cell inner membrane. The enzyme catalyses a 1-acyl-sn-glycero-3-phosphate + an acyl-CoA = a 1,2-diacyl-sn-glycero-3-phosphate + CoA. It functions in the pathway phospholipid metabolism; CDP-diacylglycerol biosynthesis; CDP-diacylglycerol from sn-glycerol 3-phosphate: step 2/3. In terms of biological role, converts lysophosphatidic acid (LPA) into phosphatidic acid by incorporating acyl moiety at the 2 position. This chain is 1-acyl-sn-glycerol-3-phosphate acyltransferase (plsC), found in Haemophilus influenzae (strain ATCC 51907 / DSM 11121 / KW20 / Rd).